A 380-amino-acid polypeptide reads, in one-letter code: Cytochrome b (380 aa).

4 helical membrane-spanning segments follow: residues phenylalanine 33–methionine 53, tryptophan 77–valine 98, tryptophan 113–leucine 133, and phenylalanine 178–leucine 198. The heme b site is built by histidine 83 and histidine 97. The heme b site is built by histidine 182 and histidine 196. Histidine 201 is an a ubiquinone binding site. A run of 4 helical transmembrane segments spans residues tyrosine 226–threonine 246, leucine 288–histidine 308, isoleucine 320–glycine 340, and phenylalanine 347–proline 367.

The protein belongs to the cytochrome b family. In terms of assembly, the cytochrome bc1 complex contains 3 respiratory subunits (MT-CYB, CYC1 and UQCRFS1), 2 core proteins (UQCRC1 and UQCRC2) and probably 6 low-molecular weight proteins. It depends on heme b as a cofactor.

The protein resides in the mitochondrion inner membrane. Functionally, component of the ubiquinol-cytochrome c reductase complex (complex III or cytochrome b-c1 complex) that is part of the mitochondrial respiratory chain. The b-c1 complex mediates electron transfer from ubiquinol to cytochrome c. Contributes to the generation of a proton gradient across the mitochondrial membrane that is then used for ATP synthesis. This Latimeria chalumnae (Coelacanth) protein is Cytochrome b (mt-cyb).